The following is a 232-amino-acid chain: LexA repressor (232 aa).

A DNA-binding region (H-T-H motif) is located at residues 26 to 46 (FDEMKDALDLRSKSGIHRLIT). Active-site for autocatalytic cleavage activity residues include serine 153 and lysine 191.

The protein belongs to the peptidase S24 family. As to quaternary structure, homodimer.

It catalyses the reaction Hydrolysis of Ala-|-Gly bond in repressor LexA.. In terms of biological role, represses a number of genes involved in the response to DNA damage (SOS response), including recA and lexA. In the presence of single-stranded DNA, RecA interacts with LexA causing an autocatalytic cleavage which disrupts the DNA-binding part of LexA, leading to derepression of the SOS regulon and eventually DNA repair. This is LexA repressor from Bradyrhizobium sp. (strain ORS 278).